The chain runs to 103 residues: Histone H4 (103 aa).

Over residues methionine 1 to glycine 14 the composition is skewed to gly residues. The interval methionine 1–arginine 20 is disordered. Residue serine 2 is modified to N-acetylserine. N6-acetyllysine is present on lysine 17. Residues lysine 17–lysine 21 mediate DNA binding. Residue lysine 21 is modified to N6-methyllysine.

This sequence belongs to the histone H4 family. As to quaternary structure, the nucleosome is a histone octamer containing two molecules each of H2A, H2B, H3 and H4 assembled in one H3-H4 heterotetramer and two H2A-H2B heterodimers. The octamer wraps approximately 147 bp of DNA.

It is found in the nucleus. The protein localises to the chromosome. Its function is as follows. Core component of nucleosome. Nucleosomes wrap and compact DNA into chromatin, limiting DNA accessibility to the cellular machineries which require DNA as a template. Histones thereby play a central role in transcription regulation, DNA repair, DNA replication and chromosomal stability. DNA accessibility is regulated via a complex set of post-translational modifications of histones, also called histone code, and nucleosome remodeling. The protein is Histone H4 of Pyrenomonas salina.